Consider the following 313-residue polypeptide: Ribosomal RNA small subunit methyltransferase H (313 aa).

S-adenosyl-L-methionine-binding positions include 35-37, aspartate 55, phenylalanine 79, aspartate 101, and glutamine 108; that span reads GGH.

The protein belongs to the methyltransferase superfamily. RsmH family.

Its subcellular location is the cytoplasm. The enzyme catalyses cytidine(1402) in 16S rRNA + S-adenosyl-L-methionine = N(4)-methylcytidine(1402) in 16S rRNA + S-adenosyl-L-homocysteine + H(+). In terms of biological role, specifically methylates the N4 position of cytidine in position 1402 (C1402) of 16S rRNA. In Klebsiella pneumoniae (strain 342), this protein is Ribosomal RNA small subunit methyltransferase H.